Reading from the N-terminus, the 416-residue chain is MNDRFRIRKLKGYEIIDSRANRTIRVRVETYDGIVGFGDAPAGASKGANEAVELKDKNGRVIDAVELVNTVLSDSLKDYDVRRQRVIDTTLIRLDGTQNKSRIGGNTMIATSIAVLKTASRALGQEYFEYIGGPRAKYIPMPLLNILNGGLHAGNNLKIQEFIIIPKNFDKFTEAIQASIEVYKRLKDLITERYGKIYTALGDEGGFSPPLEKTMDALDLVYTSIKSLGYEDKIFMGMDAAASNFFHESHYELDGKRYTAGELIDYYKQLADMYPLMYIEDPFEENDYDSFSQLQSKLKKTIVTGDDLYVTNIEYLKKGIERMSSKGTIVKPNQIGTITETLDYIDFARRNAVKTIVSHRSGETEDSIIADLAVGTQSEFIKTGAPSRGERTSKYNRLIEIELDYGLEFYGKNFYL.

Q160 lines the (2R)-2-phosphoglycerate pocket. The active-site Proton donor is the E204. Residues D239, E280, and D306 each contribute to the Mg(2+) site. (2R)-2-phosphoglycerate-binding residues include K331, R360, S361, and K382. The Proton acceptor role is filled by K331.

It belongs to the enolase family. The cofactor is Mg(2+).

The protein resides in the cytoplasm. It is found in the secreted. It localises to the cell surface. It carries out the reaction (2R)-2-phosphoglycerate = phosphoenolpyruvate + H2O. The protein operates within carbohydrate degradation; glycolysis; pyruvate from D-glyceraldehyde 3-phosphate: step 4/5. In terms of biological role, catalyzes the reversible conversion of 2-phosphoglycerate (2-PG) into phosphoenolpyruvate (PEP). It is essential for the degradation of carbohydrates via glycolysis. In Sulfolobus acidocaldarius (strain ATCC 33909 / DSM 639 / JCM 8929 / NBRC 15157 / NCIMB 11770), this protein is Enolase.